Here is a 401-residue protein sequence, read N- to C-terminus: Imidazolonepropionase (401 aa).

Fe(3+) contacts are provided by H66 and H68. The Zn(2+) site is built by H66 and H68. Positions 75, 138, and 171 each coordinate 4-imidazolone-5-propanoate. Y138 contributes to the N-formimidoyl-L-glutamate binding site. H236 is a binding site for Fe(3+). Zn(2+) is bound at residue H236. A 4-imidazolone-5-propanoate-binding site is contributed by Q239. D311 is a binding site for Fe(3+). A Zn(2+)-binding site is contributed by D311. Positions 313 and 315 each coordinate N-formimidoyl-L-glutamate. T316 is a binding site for 4-imidazolone-5-propanoate.

This sequence belongs to the metallo-dependent hydrolases superfamily. HutI family. The cofactor is Zn(2+). Requires Fe(3+) as cofactor.

The protein resides in the cytoplasm. The enzyme catalyses 4-imidazolone-5-propanoate + H2O = N-formimidoyl-L-glutamate. It functions in the pathway amino-acid degradation; L-histidine degradation into L-glutamate; N-formimidoyl-L-glutamate from L-histidine: step 3/3. In terms of biological role, catalyzes the hydrolytic cleavage of the carbon-nitrogen bond in imidazolone-5-propanoate to yield N-formimidoyl-L-glutamate. It is the third step in the universal histidine degradation pathway. The polypeptide is Imidazolonepropionase (Pseudomonas entomophila (strain L48)).